A 316-amino-acid polypeptide reads, in one-letter code: 4-hydroxy-3-methylbut-2-enyl diphosphate reductase (316 aa).

Cys12 lines the [4Fe-4S] cluster pocket. (2E)-4-hydroxy-3-methylbut-2-enyl diphosphate is bound by residues His41 and His74. Positions 41 and 74 each coordinate dimethylallyl diphosphate. Residues His41 and His74 each contribute to the isopentenyl diphosphate site. Residue Cys96 participates in [4Fe-4S] cluster binding. Residue His124 coordinates (2E)-4-hydroxy-3-methylbut-2-enyl diphosphate. A dimethylallyl diphosphate-binding site is contributed by His124. His124 lines the isopentenyl diphosphate pocket. The active-site Proton donor is Glu126. Thr169 serves as a coordination point for (2E)-4-hydroxy-3-methylbut-2-enyl diphosphate. Cys199 provides a ligand contact to [4Fe-4S] cluster. (2E)-4-hydroxy-3-methylbut-2-enyl diphosphate is bound by residues Ser227, Ser228, Asn229, and Ser271. The dimethylallyl diphosphate site is built by Ser227, Ser228, Asn229, and Ser271. Isopentenyl diphosphate is bound by residues Ser227, Ser228, Asn229, and Ser271.

This sequence belongs to the IspH family. Requires [4Fe-4S] cluster as cofactor.

The enzyme catalyses isopentenyl diphosphate + 2 oxidized [2Fe-2S]-[ferredoxin] + H2O = (2E)-4-hydroxy-3-methylbut-2-enyl diphosphate + 2 reduced [2Fe-2S]-[ferredoxin] + 2 H(+). It carries out the reaction dimethylallyl diphosphate + 2 oxidized [2Fe-2S]-[ferredoxin] + H2O = (2E)-4-hydroxy-3-methylbut-2-enyl diphosphate + 2 reduced [2Fe-2S]-[ferredoxin] + 2 H(+). It functions in the pathway isoprenoid biosynthesis; dimethylallyl diphosphate biosynthesis; dimethylallyl diphosphate from (2E)-4-hydroxy-3-methylbutenyl diphosphate: step 1/1. The protein operates within isoprenoid biosynthesis; isopentenyl diphosphate biosynthesis via DXP pathway; isopentenyl diphosphate from 1-deoxy-D-xylulose 5-phosphate: step 6/6. Its function is as follows. Catalyzes the conversion of 1-hydroxy-2-methyl-2-(E)-butenyl 4-diphosphate (HMBPP) into a mixture of isopentenyl diphosphate (IPP) and dimethylallyl diphosphate (DMAPP). Acts in the terminal step of the DOXP/MEP pathway for isoprenoid precursor biosynthesis. The protein is 4-hydroxy-3-methylbut-2-enyl diphosphate reductase of Vibrio vulnificus (strain CMCP6).